A 250-amino-acid polypeptide reads, in one-letter code: DNA repair protein RecO (250 aa).

This sequence belongs to the RecO family.

Functionally, involved in DNA repair and RecF pathway recombination. The chain is DNA repair protein RecO from Lactobacillus acidophilus (strain ATCC 700396 / NCK56 / N2 / NCFM).